A 240-amino-acid polypeptide reads, in one-letter code: Ribonuclease PH (240 aa).

Residues R87 and 125 to 127 contribute to the phosphate site; that span reads GTR.

It belongs to the RNase PH family. As to quaternary structure, homohexameric ring arranged as a trimer of dimers.

It carries out the reaction tRNA(n+1) + phosphate = tRNA(n) + a ribonucleoside 5'-diphosphate. Its function is as follows. Phosphorolytic 3'-5' exoribonuclease that plays an important role in tRNA 3'-end maturation. Removes nucleotide residues following the 3'-CCA terminus of tRNAs; can also add nucleotides to the ends of RNA molecules by using nucleoside diphosphates as substrates, but this may not be physiologically important. Probably plays a role in initiation of 16S rRNA degradation (leading to ribosome degradation) during starvation. In Pseudomonas putida (strain GB-1), this protein is Ribonuclease PH.